Reading from the N-terminus, the 369-residue chain is Ferredoxin--NADP reductase 2 (369 aa).

Positions 1 to 23 are disordered; the sequence is MDLSIPNPVADTTKQVDGGSPAG. Asp-58, Gln-66, Tyr-71, Val-111, Phe-146, Asp-311, and Thr-352 together coordinate FAD.

It belongs to the ferredoxin--NADP reductase type 2 family. Homodimer. FAD is required as a cofactor.

The catalysed reaction is 2 reduced [2Fe-2S]-[ferredoxin] + NADP(+) + H(+) = 2 oxidized [2Fe-2S]-[ferredoxin] + NADPH. This is Ferredoxin--NADP reductase 2 from Cupriavidus necator (strain ATCC 17699 / DSM 428 / KCTC 22496 / NCIMB 10442 / H16 / Stanier 337) (Ralstonia eutropha).